The sequence spans 733 residues: Alpha-galactosidase 1 (733 aa).

The active-site Nucleophile is the Asp-480. Asp-550 functions as the Proton donor in the catalytic mechanism.

It belongs to the glycosyl hydrolase 36 family.

The enzyme catalyses Hydrolysis of terminal, non-reducing alpha-D-galactose residues in alpha-D-galactosides, including galactose oligosaccharides, galactomannans and galactolipids.. Its function is as follows. Alpha-galactosidase associated with the raffinose operon. The sequence is that of Alpha-galactosidase 1 (agaR) from Pediococcus pentosaceus.